The following is a 418-amino-acid chain: D-amino acid dehydrogenase (418 aa).

3–17 (VLVLGAGVAGVSSAW) contributes to the FAD binding site.

This sequence belongs to the DadA oxidoreductase family. The cofactor is FAD.

The catalysed reaction is a D-alpha-amino acid + A + H2O = a 2-oxocarboxylate + AH2 + NH4(+). Its pathway is amino-acid degradation; D-alanine degradation; NH(3) and pyruvate from D-alanine: step 1/1. Functionally, oxidative deamination of D-amino acids. The protein is D-amino acid dehydrogenase of Neisseria meningitidis serogroup C (strain 053442).